Consider the following 313-residue polypeptide: MEKFTIKDLTDNLKFEIISGQDKLDTEIKSYGINRAGLELADYFKPFKDQSEWRATLMSTKESGYMLQFDEETKIKKYTQLMKCGIPVLIITNKFKDKTLIKVAKRLNFPLLRSDYPITIQLVQKIQDIYDIYFSPTAEEHAALMNIFGTGVLIKGKSGIGKSELCLDLIKHNHLFIGDDRIILTNKSNKIIGRVHPILKNLIEIRGIGIFDIVKSNGYQVIMNESPVELVVELVEYKEQNIDNSDRLGNDWSKFKILGVEIEHIQIPVSAGRSLVNIIESAVAQFKINKSKQFENVFDVIHKRTKEFLSSKK.

Catalysis depends on residues histidine 141 and lysine 162. An ATP-binding site is contributed by 156–163; the sequence is GKSGIGKS. Serine 163 serves as a coordination point for Mg(2+). The active-site Proton acceptor; for phosphorylation activity. Proton donor; for dephosphorylation activity is the aspartate 180. The interval 203–212 is important for the catalytic mechanism of both phosphorylation and dephosphorylation; that stretch reads IEIRGIGIFD. Glutamate 204 is a Mg(2+) binding site. Arginine 247 is an active-site residue. The important for the catalytic mechanism of dephosphorylation stretch occupies residues 268 to 273; it reads PVSAGR.

The protein belongs to the HPrK/P family. In terms of assembly, homohexamer. Mg(2+) serves as cofactor.

The enzyme catalyses [HPr protein]-L-serine + ATP = [HPr protein]-O-phospho-L-serine + ADP + H(+). It carries out the reaction [HPr protein]-O-phospho-L-serine + phosphate + H(+) = [HPr protein]-L-serine + diphosphate. Functionally, catalyzes the ATP- as well as the pyrophosphate-dependent phosphorylation of a specific serine residue in HPr, a phosphocarrier protein of the phosphoenolpyruvate-dependent sugar phosphotransferase system (PTS). HprK/P also catalyzes the pyrophosphate-producing, inorganic phosphate-dependent dephosphorylation (phosphorolysis) of seryl-phosphorylated HPr (P-Ser-HPr). The two antagonistic activities of HprK/P are regulated by several intracellular metabolites, which change their concentration in response to the absence or presence of rapidly metabolisable carbon sources (glucose, fructose, etc.) in the growth medium. Therefore, by controlling the phosphorylation state of HPr, HPrK/P is a sensor enzyme that plays a major role in the regulation of carbon metabolism and sugar transport: it mediates carbon catabolite repression (CCR), and regulates PTS-catalyzed carbohydrate uptake and inducer exclusion. This Mycoplasma mycoides subsp. mycoides SC (strain CCUG 32753 / NCTC 10114 / PG1) protein is HPr kinase/phosphorylase.